A 60-amino-acid chain; its full sequence is Large ribosomal subunit protein bL32 (60 aa).

Positions Met-1 to Thr-36 are disordered. Basic residues predominate over residues Ser-9–His-19.

The protein belongs to the bacterial ribosomal protein bL32 family.

This is Large ribosomal subunit protein bL32 from Methylibium petroleiphilum (strain ATCC BAA-1232 / LMG 22953 / PM1).